A 187-amino-acid polypeptide reads, in one-letter code: Acireductone dioxygenase 4 (187 aa).

An N-acetylalanine modification is found at alanine 2. Fe(2+) is bound by residues histidine 89, histidine 91, glutamate 95, and histidine 134. 4 residues coordinate Ni(2+): histidine 89, histidine 91, glutamate 95, and histidine 134.

The protein belongs to the acireductone dioxygenase (ARD) family. Requires Fe(2+) as cofactor. Ni(2+) is required as a cofactor.

The protein localises to the cytoplasm. Its subcellular location is the nucleus. It carries out the reaction 1,2-dihydroxy-5-(methylsulfanyl)pent-1-en-3-one + O2 = 4-methylsulfanyl-2-oxobutanoate + formate + 2 H(+). The catalysed reaction is 1,2-dihydroxy-5-(methylsulfanyl)pent-1-en-3-one + O2 = 3-(methylsulfanyl)propanoate + CO + formate + 2 H(+). Its pathway is amino-acid biosynthesis; L-methionine biosynthesis via salvage pathway; L-methionine from S-methyl-5-thio-alpha-D-ribose 1-phosphate: step 5/6. In terms of biological role, catalyzes 2 different reactions between oxygen and the acireductone 1,2-dihydroxy-3-keto-5-methylthiopentene (DHK-MTPene) depending upon the metal bound in the active site. Fe-containing acireductone dioxygenase (Fe-ARD) produces formate and 2-keto-4-methylthiobutyrate (KMTB), the alpha-ketoacid precursor of methionine in the methionine recycle pathway. Ni-containing acireductone dioxygenase (Ni-ARD) produces methylthiopropionate, carbon monoxide and formate, and does not lie on the methionine recycle pathway. The sequence is that of Acireductone dioxygenase 4 (ARD4) from Arabidopsis thaliana (Mouse-ear cress).